Consider the following 366-residue polypeptide: Polyprenyl transferase AOL_s00215g276 (366 aa).

The disordered stretch occupies residues 1-22 (MESIIARPRTRSSAKEKTQTMS). The next 7 membrane-spanning stretches (helical) occupy residues 53–73 (LHTL…CLSA), 85–105 (FLSV…AFCT), 137–157 (IIAF…TLGF), 160–180 (ALVC…KRVV), 185–205 (LVLG…VAGN), 212–232 (AVPM…IYAT), and 253–273 (HMHQ…SFTA). An N-linked (GlcNAc...) asparagine glycan is attached at Asn-277. 2 helical membrane passes run 281–301 (LFWS…LLSL) and 312–332 (VFLM…IELW). Asn-352 is a glycosylation site (N-linked (GlcNAc...) asparagine).

This sequence belongs to the UbiA prenyltransferase family. Mg(2+) is required as a cofactor.

The protein localises to the membrane. Its pathway is secondary metabolite biosynthesis; terpenoid biosynthesis. Polyprenyl transferase; part of the gene cluster that mediates the biosynthesis of sesquiterpenyl epoxy-cyclohexenoids (SECs) such as anthrobotrisins and arthrosporols, metabolites that possess a novel hybrid carbon skeleton consisting of a polyketide-derived epoxycyclohexenol combined with a terpenoid-derived monocyclic sesquiterpenol substructure (PKS-PTS hybrid). The SEC pathway plays an important role for fungal soil colonization via decreasing fungal nematode-capturing ability. Within the pathway, the polyprenyl transferase catalyzes the farnesylation of toluquinol to yield farnesyl hydroquinone, the first hybrid precursor for biosynthesis of SECs, and farnesyl quinone (34) might be the key precursor for the epoxy ring formation. The pathway begins with the biosynthesis of 6-methylsalicylic acid (6-MSA), the first precursor of the polyketide-derived epoxycyclohexenol in arthrosporols, by the polyketide synthase (PKS) AOL_s00215g283 via condensation of 1 acetate and 3 malonate units. The 6-methylsalicylic acid decarboxylase AOL_s00215g281 then catalyzes the decarboxylation of 6-methylsalicylic acid to yield m-cresol. The cytochrome P450 monooxygenase AOL_s00215g282 further oxidizes m-cresol to yield toluquinol. With the assistance of the oxidoreductase AOL_s00215g277, the polyprenyl transferase AOL_s00215g276 catalyzes the farnesylation of toluquinol to produce farnesyl hydroquinone, the hybrid precursor for biosynthesis of SECs. Farnesyl hydroquinone undergoes epoxidation and then subsequent dehydrogenation to form farnesyl epoxy-quinone, the first and simplest SEC. The cytochrome P450 monooxygenase AOL_s00215g278 and the FAD-dependent monooxygenase AOL_s00215g279 might be involved in the oxygenation of the phenol moiety, most likely in the epoxy formation. The cytochrome P450 monooxygenases AOL_s00215g274 and AOL_s00215g280 are involved in specific regional ketone reductions at respectively C-4 and C-1 of farnesyl epoxy-quinone PubMed:33823587. This Arthrobotrys oligospora (strain ATCC 24927 / CBS 115.81 / DSM 1491) (Nematode-trapping fungus) protein is Polyprenyl transferase AOL_s00215g276.